We begin with the raw amino-acid sequence, 2319 residues long: AT-rich interactive domain-containing protein 1B (2319 aa).

2 stretches are compositionally biased toward low complexity: residues 1–21 (MAAR…ARAG) and 43–56 (GARG…APGP). Disordered stretches follow at residues 1 to 74 (MAAR…VHHH), 155 to 306 (VGEA…GGGG), 321 to 414 (APAS…GAGA), 487 to 546 (RFAG…AGAA), 577 to 1062 (QQRS…LMNT), and 1085 to 1129 (DMMS…KITK). Residue A2 is modified to N-acetylalanine. Positions 57 to 68 (MLGGGGDGGGGL) are enriched in gly residues. Residues 165–188 (QQHHHHHHAHHHHHHAHHLHHHHA) show a composition bias toward basic residues. Low complexity-rich tracts occupy residues 189–215 (LQQQ…QQQH) and 343–363 (SPGM…PGSM). The segment covering 365–379 (PLQNSHEGYPNSQCN) has biased composition (polar residues). The span at 388 to 414 (GAGGGGGGGGGGGGGSGGGGGGGGAGA) shows a compositional bias: gly residues. R487 is subject to Asymmetric dimethylarginine. Residues 489-510 (AGQNQHPSGATPTLNQLLTSPS) show a composition bias toward polar residues. The short motif at 502 to 506 (LNQLL) is the LXXLL element. The span at 536-546 (PQSQAAAAGAA) shows a compositional bias: low complexity. Phosphoserine occurs at positions 585 and 599. An Asymmetric dimethylarginine modification is found at R608. The segment covering 620–630 (SQPQQSSPYPG) has biased composition (low complexity). R640 carries the post-translational modification Asymmetric dimethylarginine. Composition is skewed to low complexity over residues 651–670 (GAMA…YGQQ), 677–687 (QQGQQPYYSQQ), 695–712 (PQAQ…QPQQ), 767–783 (SSAV…GDQS), 811–832 (GSPV…IPGS), and 840–849 (GSQSESSSHP). Positions 866–880 (TQRNPQMAQYGPQQT) are enriched in polar residues. The segment covering 881–892 (GPSMSPHPSPGG) has biased composition (low complexity). Polar residues-rich tracts occupy residues 899–923 (SSFQ…QGNY) and 947–958 (SANNQMHGQGPS). 2 stretches are compositionally biased toward low complexity: residues 980–994 (PGNM…PGMS) and 1014–1028 (EAAA…NSAQ). The span at 1029-1062 (SRQGSFPGMNQSGLMASSSPYSQPMNNSSSLMNT) shows a compositional bias: polar residues. The region spanning 1136-1227 (EPERKLWVDR…YLFAFECKIE (92 aa)) is the ARID domain. Disordered stretches follow at residues 1230–1334 (EEPP…QQGM), 1346–1443 (EPNK…PNYK), 1475–1647 (NQYG…FLPS), and 1782–1852 (DHNA…KQAS). Polar residues-rich tracts occupy residues 1254–1273 (ANSG…SNSM) and 1287–1304 (STPH…SSTI). The span at 1305 to 1319 (SVHDPFSDVSDSSFP) shows a compositional bias: low complexity. 2 stretches are compositionally biased toward polar residues: residues 1320-1334 (KRNS…QQGM) and 1364-1388 (PFMT…SGAM). Residues 1426–1440 (PPYGGHQPGLYPQQP) show a composition bias toward low complexity. The Nuclear localization signal signature appears at 1441-1460 (NYKRHMDGMYGPPAKRHEGD). Polar residues-rich tracts occupy residues 1522–1534 (LQSS…QQNM) and 1579–1601 (ESQW…SMQP). Residues S1625, S1638, and S1642 each carry the phosphoserine modification. The span at 1627–1641 (ASFQRSLENRMSPSK) shows a compositional bias: polar residues. Residues 1782–1791 (DHNAARKDDS) are compositionally biased toward basic and acidic residues. S1798 bears the Phosphoserine mark. A compositionally biased stretch (acidic residues) spans 1799–1823 (GKEEEDAECIDDDEEDEEDEEEDSE). A compositionally biased stretch (basic and acidic residues) spans 1842-1852 (ADPKEKPKQAS). K1860 carries the N6-acetyllysine modification. Disordered regions lie at residues 1904-1941 (FESK…QQEK) and 1954-1973 (RPGA…SSKF). Over residues 1925-1940 (RKKEQEGKGDSEEQQE) the composition is skewed to basic and acidic residues. An LXXLL motif is present at residues 2119-2123 (LDGLL).

As to quaternary structure, component of SWI/SNF chromatin remodeling complexes, in some of which it can be mutually exclusive with ARID1B/BAF250B. The canonical complex contains a catalytic subunit (either SMARCA4/BRG1/BAF190A or SMARCA2/BRM/BAF190B) and at least SMARCE1, ACTL6A/BAF53, SMARCC1/BAF155, SMARCC2/BAF170, and SMARCB1/SNF5/BAF47. Other subunits specific to each of the complexes may also be present permitting several possible combinations developmentally and tissue specific. Component of the BAF (SWI/SNF-A) complex, which includes at least actin (ACTB), ARID1A/BAF250A, ARID1B/BAF250B, SMARCA2/BRM, SMARCA4/BRG1/BAF190A, ACTL6A/BAF53, ACTL6B/BAF53B, SMARCE1/BAF57, SMARCC1/BAF155, SMARCC2/BAF170, SMARCB1/SNF5/INI1, and one or more SMARCD1/BAF60A, SMARCD2/BAF60B, or SMARCD3/BAF60C. In muscle cells, the BAF complex also contains DPF3. Component of neural progenitors-specific chromatin remodeling complex (npBAF complex) composed of at least, ARID1A/BAF250A or ARID1B/BAF250B, SMARCD1/BAF60A, SMARCD3/BAF60C, SMARCA2/BRM/BAF190B, SMARCA4/BRG1/BAF190A, SMARCB1/BAF47, SMARCC1/BAF155, SMARCE1/BAF57, SMARCC2/BAF170, PHF10/BAF45A, ACTL6A/BAF53A and actin. Component of neuron-specific chromatin remodeling complex (nBAF complex) composed of at least, ARID1A/BAF250A or ARID1B/BAF250B, SMARCD1/BAF60A, SMARCD3/BAF60C, SMARCA2/BRM/BAF190B, SMARCA4/BRG1/BAF190A, SMARCB1/BAF47, SMARCC1/BAF155, SMARCE1/BAF57, SMARCC2/BAF170, DPF1/BAF45B, DPF3/BAF45C, ACTL6B/BAF53B and actin. Component of a SWI/SNF-like EBAFb complex, at least composed of SMARCA4/BRG1/BAF190A, SMARCB1/BAF47/SNF5, ACTL6A/BAF53A, SMARCE1/BAF57, SMARCD1/BAF60A, SMARCD2/BAF60B, SMARCC1/BAF155, SMARCC2/BAF170, ARID1B/BAF250B, MLLT1/ENL and actin. Interacts through its C-terminus with SMARCA2/BRM/BAF190B and SMARCA4/BRG1/BAF190A. Interacts with SMARCC1/BAF155. Widely expressed with high levels in heart, skeletal muscle and kidney.

The protein localises to the nucleus. Involved in transcriptional activation and repression of select genes by chromatin remodeling (alteration of DNA-nucleosome topology). Component of SWI/SNF chromatin remodeling complexes that carry out key enzymatic activities, changing chromatin structure by altering DNA-histone contacts within a nucleosome in an ATP-dependent manner. Belongs to the neural progenitors-specific chromatin remodeling complex (npBAF complex) and the neuron-specific chromatin remodeling complex (nBAF complex). During neural development a switch from a stem/progenitor to a postmitotic chromatin remodeling mechanism occurs as neurons exit the cell cycle and become committed to their adult state. The transition from proliferating neural stem/progenitor cells to postmitotic neurons requires a switch in subunit composition of the npBAF and nBAF complexes. As neural progenitors exit mitosis and differentiate into neurons, npBAF complexes which contain ACTL6A/BAF53A and PHF10/BAF45A, are exchanged for homologous alternative ACTL6B/BAF53B and DPF1/BAF45B or DPF3/BAF45C subunits in neuron-specific complexes (nBAF). The npBAF complex is essential for the self-renewal/proliferative capacity of the multipotent neural stem cells. The nBAF complex along with CREST plays a role regulating the activity of genes essential for dendrite growth. Binds DNA non-specifically. This is AT-rich interactive domain-containing protein 1B from Homo sapiens (Human).